A 323-amino-acid polypeptide reads, in one-letter code: MPADHIPALALAGPTASGKTAAAFAIADALAPRLPVEIISVDSALVYSGMDIGTAKPTPAEQARVPHHLIDIRDPLQAYSAAEFVQDATRLIGEIRARGALPLLVGGTMLYFKALFDGIDDMPPADAAVRARLEAQAAAIGWSGMHAELARVDPPTAARLAPGDSQRIQRALEVWHVSGRPLSSFHTTKTVAASARPMSAASLFSLEPHDRAWLHGRIAERFHAMLAAGFLDEVLRLRARGDLHADLPSMRCVGYRQAWESLDGLYPMSSLPERGIAATRQLAKRQITWLRSMPERHSIACDAPDATAQLVQAVRARVWGGGA.

13–20 (GPTASGKT) is a binding site for ATP. 15–20 (TASGKT) serves as a coordination point for substrate. 4 interaction with substrate tRNA regions span residues 42–45 (DSAL), 166–170 (QRIQR), 251–256 (RCVGYR), and 284–291 (KRQITWLR).

This sequence belongs to the IPP transferase family. In terms of assembly, monomer. The cofactor is Mg(2+).

It catalyses the reaction adenosine(37) in tRNA + dimethylallyl diphosphate = N(6)-dimethylallyladenosine(37) in tRNA + diphosphate. Catalyzes the transfer of a dimethylallyl group onto the adenine at position 37 in tRNAs that read codons beginning with uridine, leading to the formation of N6-(dimethylallyl)adenosine (i(6)A). This Acidovorax ebreus (strain TPSY) (Diaphorobacter sp. (strain TPSY)) protein is tRNA dimethylallyltransferase.